The following is a 529-amino-acid chain: Bifunctional purine biosynthesis protein PurH (529 aa).

The MGS-like domain occupies 1 to 148 (MQQRRPVRRA…KNHKDVAIVV (148 aa)).

This sequence belongs to the PurH family.

It catalyses the reaction (6R)-10-formyltetrahydrofolate + 5-amino-1-(5-phospho-beta-D-ribosyl)imidazole-4-carboxamide = 5-formamido-1-(5-phospho-D-ribosyl)imidazole-4-carboxamide + (6S)-5,6,7,8-tetrahydrofolate. The catalysed reaction is IMP + H2O = 5-formamido-1-(5-phospho-D-ribosyl)imidazole-4-carboxamide. The protein operates within purine metabolism; IMP biosynthesis via de novo pathway; 5-formamido-1-(5-phospho-D-ribosyl)imidazole-4-carboxamide from 5-amino-1-(5-phospho-D-ribosyl)imidazole-4-carboxamide (10-formyl THF route): step 1/1. Its pathway is purine metabolism; IMP biosynthesis via de novo pathway; IMP from 5-formamido-1-(5-phospho-D-ribosyl)imidazole-4-carboxamide: step 1/1. This is Bifunctional purine biosynthesis protein PurH from Klebsiella pneumoniae subsp. pneumoniae (strain ATCC 700721 / MGH 78578).